A 185-amino-acid polypeptide reads, in one-letter code: Virulence membrane protein PagC (185 aa).

An N-terminal signal peptide occupies residues 1–23 (MKNIILSTLVITTSVLVVNVAQA).

The protein belongs to the outer membrane OOP (TC 1.B.6) superfamily. Ail family.

Its subcellular location is the cell outer membrane. Functionally, essential for full virulence and survival within macrophages. The chain is Virulence membrane protein PagC (pagC) from Salmonella typhimurium (strain LT2 / SGSC1412 / ATCC 700720).